The following is a 340-amino-acid chain: Nuclear hormone receptor family member nhr-268 (340 aa).

A DNA-binding region (nuclear receptor) is located at residues 1–75 (MNCLVCSARA…IGMKAASKND (75 aa)). 2 NR C4-type zinc fingers span residues 3–23 (CLVCSARAFNRNYGVMSCFAC) and 39–58 (CKYFKNCTIHYKTHPKCRAC). The NR LBD domain occupies 98-337 (KNDKNYSNFI…KRLMQDIFSH (240 aa)).

The protein belongs to the nuclear hormone receptor family.

The protein resides in the nucleus. In terms of biological role, orphan nuclear receptor. The chain is Nuclear hormone receptor family member nhr-268 (nhr-268) from Caenorhabditis elegans.